The chain runs to 133 residues: Small ribosomal subunit protein uS8 (133 aa).

The protein belongs to the universal ribosomal protein uS8 family. Part of the 30S ribosomal subunit.

Its function is as follows. One of the primary rRNA binding proteins, it binds directly to 16S rRNA central domain where it helps coordinate assembly of the platform of the 30S subunit. This Saccharolobus islandicus (strain L.S.2.15 / Lassen #1) (Sulfolobus islandicus) protein is Small ribosomal subunit protein uS8.